Here is a 927-residue protein sequence, read N- to C-terminus: DIS3-like exonuclease 2 (927 aa).

Residues 1-12 (MDLKPNIRRKEK) show a composition bias toward basic residues. A disordered region spans residues 1 to 168 (MDLKPNIRRK…DTNNATEMVS (168 aa)). The span at 13–31 (RNLLKGEAALEKKGSIDRK) shows a compositional bias: basic and acidic residues. Residues 97–106 (VKPKAKKKNS) show a composition bias toward basic residues. A compositionally biased stretch (basic and acidic residues) spans 107 to 152 (KEKISKSSKQDEHKTDVHKESVSKLSKNLESRNNRDENSAKREKNN). The span at 153-168 (SHQVEADTNNATEMVS) shows a compositional bias: polar residues. Aspartate 453 and aspartate 462 together coordinate Mg(2+).

This sequence belongs to the RNR ribonuclease family. DIS3L2 subfamily. Mg(2+) serves as cofactor. Requires Mn(2+) as cofactor.

The protein localises to the cytoplasm. It localises to the P-body. Functionally, 3'-5'-exoribonuclease that specifically recognizes RNAs polyuridylated at their 3' end and mediates their degradation. Component of an exosome-independent RNA degradation pathway that mediates degradation of cytoplasmic mRNAs that have been deadenylated and subsequently uridylated at their 3'. The protein is DIS3-like exonuclease 2 (dis32) of Schizosaccharomyces pombe (strain 972 / ATCC 24843) (Fission yeast).